Consider the following 161-residue polypeptide: Cyclic pyranopterin monophosphate synthase (161 aa).

Residues 75–77 (LCH) and 113–114 (ME) each bind substrate. Residue aspartate 128 is part of the active site.

This sequence belongs to the MoaC family. Homohexamer; trimer of dimers.

It catalyses the reaction (8S)-3',8-cyclo-7,8-dihydroguanosine 5'-triphosphate = cyclic pyranopterin phosphate + diphosphate. It participates in cofactor biosynthesis; molybdopterin biosynthesis. In terms of biological role, catalyzes the conversion of (8S)-3',8-cyclo-7,8-dihydroguanosine 5'-triphosphate to cyclic pyranopterin monophosphate (cPMP). The protein is Cyclic pyranopterin monophosphate synthase of Salmonella heidelberg (strain SL476).